Reading from the N-terminus, the 715-residue chain is Photosystem I P700 chlorophyll a apoprotein A1 (715 aa).

Transmembrane regions (helical) follow at residues 60-83, 146-169, 185-209, 281-299, 336-359, 375-401, 423-445, and 521-539; these read VFSA…FHGA, LYST…FHYH, LNHH…HVSL, TVHH…GHMY, WHAQ…HHMY, LSLF…IFMV, AIIS…LYIH, and FLVH…LILL. [4Fe-4S] cluster-binding residues include Cys-563 and Cys-572. The next 2 membrane-spanning stretches (helical) occupy residues 579–600 and 654–676; these read HVFL…HFSW and LSAY…MFLF. His-665 is a chlorophyll a' binding site. Met-673 and Tyr-681 together coordinate chlorophyll a. Trp-682 contributes to the phylloquinone binding site. The chain crosses the membrane as a helical span at residues 714–715; the sequence is AE.

This sequence belongs to the PsaA/PsaB family. As to quaternary structure, the PsaA/B heterodimer binds the P700 chlorophyll special pair and subsequent electron acceptors. PSI consists of a core antenna complex that captures photons, and an electron transfer chain that converts photonic excitation into a charge separation. The eukaryotic PSI reaction center is composed of at least 11 subunits. The cofactor is P700 is a chlorophyll a/chlorophyll a' dimer, A0 is one or more chlorophyll a, A1 is one or both phylloquinones and FX is a shared 4Fe-4S iron-sulfur center..

The protein resides in the plastid. Its subcellular location is the chloroplast thylakoid membrane. The enzyme catalyses reduced [plastocyanin] + hnu + oxidized [2Fe-2S]-[ferredoxin] = oxidized [plastocyanin] + reduced [2Fe-2S]-[ferredoxin]. PsaA and PsaB bind P700, the primary electron donor of photosystem I (PSI), as well as the electron acceptors A0, A1 and FX. PSI is a plastocyanin-ferredoxin oxidoreductase, converting photonic excitation into a charge separation, which transfers an electron from the donor P700 chlorophyll pair to the spectroscopically characterized acceptors A0, A1, FX, FA and FB in turn. Oxidized P700 is reduced on the lumenal side of the thylakoid membrane by plastocyanin. The chain is Photosystem I P700 chlorophyll a apoprotein A1 from Phlegmariurus squarrosus (Rock tassel fern).